Here is a 713-residue protein sequence, read N- to C-terminus: tRNA 5-methylaminomethyl-2-thiouridine biosynthesis bifunctional protein MnmC (713 aa).

Residues 1 to 300 (MTAEPNKPCQ…MAAILSSATP (300 aa)) form a tRNA (mnm(5)s(2)U34)-methyltransferase region. An FAD-dependent cmnm(5)s(2)U34 oxidoreductase region spans residues 306–713 (IGGGLASAHL…LRKLLKGKAL (408 aa)).

In the N-terminal section; belongs to the methyltransferase superfamily. tRNA (mnm(5)s(2)U34)-methyltransferase family. This sequence in the C-terminal section; belongs to the DAO family. It depends on FAD as a cofactor.

The protein resides in the cytoplasm. It carries out the reaction 5-aminomethyl-2-thiouridine(34) in tRNA + S-adenosyl-L-methionine = 5-methylaminomethyl-2-thiouridine(34) in tRNA + S-adenosyl-L-homocysteine + H(+). In terms of biological role, catalyzes the last two steps in the biosynthesis of 5-methylaminomethyl-2-thiouridine (mnm(5)s(2)U) at the wobble position (U34) in tRNA. Catalyzes the FAD-dependent demodification of cmnm(5)s(2)U34 to nm(5)s(2)U34, followed by the transfer of a methyl group from S-adenosyl-L-methionine to nm(5)s(2)U34, to form mnm(5)s(2)U34. This is tRNA 5-methylaminomethyl-2-thiouridine biosynthesis bifunctional protein MnmC from Shewanella baltica (strain OS155 / ATCC BAA-1091).